Consider the following 145-residue polypeptide: Transcription antitermination protein NusB (145 aa).

This sequence belongs to the NusB family.

Functionally, involved in transcription antitermination. Required for transcription of ribosomal RNA (rRNA) genes. Binds specifically to the boxA antiterminator sequence of the ribosomal RNA (rrn) operons. The chain is Transcription antitermination protein NusB from Aromatoleum aromaticum (strain DSM 19018 / LMG 30748 / EbN1) (Azoarcus sp. (strain EbN1)).